Consider the following 202-residue polypeptide: Imidazoleglycerol-phosphate dehydratase (202 aa).

It belongs to the imidazoleglycerol-phosphate dehydratase family.

The protein localises to the cytoplasm. It catalyses the reaction D-erythro-1-(imidazol-4-yl)glycerol 3-phosphate = 3-(imidazol-4-yl)-2-oxopropyl phosphate + H2O. The protein operates within amino-acid biosynthesis; L-histidine biosynthesis; L-histidine from 5-phospho-alpha-D-ribose 1-diphosphate: step 6/9. The chain is Imidazoleglycerol-phosphate dehydratase from Rhizobium johnstonii (strain DSM 114642 / LMG 32736 / 3841) (Rhizobium leguminosarum bv. viciae).